A 34-amino-acid polypeptide reads, in one-letter code: Jingzhaotoxin F7-10.36 (34 aa).

Intrachain disulfides connect Cys2-Cys17, Cys9-Cys22, and Cys16-Cys29.

It belongs to the neurotoxin 10 (Hwtx-1) family. 50 (Jztz-F7) subfamily. Expressed by the venom gland.

The protein localises to the secreted. Its function is as follows. Probable ion channel inhibitor. The chain is Jingzhaotoxin F7-10.36 from Chilobrachys guangxiensis (Chinese earth tiger tarantula).